Here is a 95-residue protein sequence, read N- to C-terminus: Acylphosphatase (95 aa).

Positions 9–95 (RLTAWVHGRV…KGGLTGFVER (87 aa)) constitute an Acylphosphatase-like domain. Residues Arg-24 and Asn-42 contribute to the active site.

Belongs to the acylphosphatase family.

The catalysed reaction is an acyl phosphate + H2O = a carboxylate + phosphate + H(+). In Saccharopolyspora erythraea (strain ATCC 11635 / DSM 40517 / JCM 4748 / NBRC 13426 / NCIMB 8594 / NRRL 2338), this protein is Acylphosphatase (acyP).